Consider the following 825-residue polypeptide: Probable inorganic carbon transporter subunit DabA (825 aa).

Residues Cys334, Asp336, His521, and Cys536 each coordinate Zn(2+).

Belongs to the inorganic carbon transporter (TC 9.A.2) DabA family. As to quaternary structure, forms a complex with DabB. The cofactor is Zn(2+).

It localises to the cell inner membrane. In terms of biological role, part of an energy-coupled inorganic carbon pump. The chain is Probable inorganic carbon transporter subunit DabA from Acidithiobacillus ferrooxidans (strain ATCC 53993 / BNL-5-31) (Leptospirillum ferrooxidans (ATCC 53993)).